Consider the following 210-residue polypeptide: MVCGGFACSKNALCALNVVYMLVSLLLIGVAAWGKGLGLVSSIHIIGGVIAVGVFLLLIAVAGLVGAVNHHQVLLFFYMIILGLVFIFQFVISCSCLAINRSKQTDVINASWWVMSNKTRDELERSFDCCGLFNLTTLYQQDYDFCTAICKSQSPTCQMCGEKFLKHSDEALKILGGVGLFFSFTEILGVWLAMRFRNQKDPRANPSAFL.

Residues 1-12 lie on the Cytoplasmic side of the membrane; it reads MVCGGFACSKNA. A helical membrane pass occupies residues 13–33; that stretch reads LCALNVVYMLVSLLLIGVAAW. The Extracellular segment spans residues 34–44; the sequence is GKGLGLVSSIH. The helical transmembrane segment at 45 to 65 threads the bilayer; it reads IIGGVIAVGVFLLLIAVAGLV. The Cytoplasmic portion of the chain corresponds to 66-72; the sequence is GAVNHHQ. A helical transmembrane segment spans residues 73–93; that stretch reads VLLFFYMIILGLVFIFQFVIS. At 94 to 173 the chain is on the extracellular side; that stretch reads CSCLAINRSK…FLKHSDEALK (80 aa). N-linked (GlcNAc...) asparagine glycans are attached at residues Asn-100, Asn-109, Asn-117, and Asn-134. A helical membrane pass occupies residues 174–194; sequence ILGGVGLFFSFTEILGVWLAM. Residues 195–210 are Cytoplasmic-facing; that stretch reads RFRNQKDPRANPSAFL.

It belongs to the tetraspanin (TM4SF) family.

The protein localises to the membrane. This Homo sapiens (Human) protein is Tetraspanin-31 (TSPAN31).